We begin with the raw amino-acid sequence, 220 residues long: Deoxyribose-phosphate aldolase (220 aa).

Asp-89 acts as the Proton donor/acceptor in catalysis. The Schiff-base intermediate with acetaldehyde role is filled by Lys-151. The active-site Proton donor/acceptor is the Lys-180.

It belongs to the DeoC/FbaB aldolase family. DeoC type 1 subfamily.

It is found in the cytoplasm. It catalyses the reaction 2-deoxy-D-ribose 5-phosphate = D-glyceraldehyde 3-phosphate + acetaldehyde. Its pathway is carbohydrate degradation; 2-deoxy-D-ribose 1-phosphate degradation; D-glyceraldehyde 3-phosphate and acetaldehyde from 2-deoxy-alpha-D-ribose 1-phosphate: step 2/2. Catalyzes a reversible aldol reaction between acetaldehyde and D-glyceraldehyde 3-phosphate to generate 2-deoxy-D-ribose 5-phosphate. The protein is Deoxyribose-phosphate aldolase of Streptococcus suis (strain 05ZYH33).